A 485-amino-acid polypeptide reads, in one-letter code: MDTRFNDINRVKMGDESKSVDGEVNDNTYYSKTDAEVNFEHRYTTPETRLYKKRWVIVCLFSSYSLCNSYQWIQYGIINNIFMRFYGVDSFTIDWMSMIYMLTYIPLIFPVSWLLDKKGLRVIALVAAALNCAGTWIKVASARPDLFPVTFLGQFTCSVAQVFILGMPSRIASVWFGSDEVSTACSIGVFGNQLGIAIGFLVPPILVPNVDDLDELAAHIRVMFYITAGVATFLFVLVVIVFQERPEIPPTLAQAAARRISPESYSYTASILRLLRNKAFILLVITYGLNVGCFYAVSTLLNRMIIEHYPGEEVNAGRIGLTIVVAGMVGSLICGIWLDRSKTYKQTTLAVYLMSLMGLVIYAFTLDLHHLWVVFITAGALGFFMTGYLPLGFEFAVELTYPESEGTSSGLLNCSAQVFGIIFTICQGKIMDSFGTLAGNLFLCAFLLIGTIITGCIKSDLRRQLANQQAQTADHLDTSPTQTRF.

At 1–46 (MDTRFNDINRVKMGDESKSVDGEVNDNTYYSKTDAEVNFEHRYTTP) the chain is on the cytoplasmic side. A helical membrane pass occupies residues 47–71 (ETRLYKKRWVIVCLFSSYSLCNSYQ). Choline contacts are provided by N68 and W72. Topologically, residues 72-89 (WIQYGIINNIFMRFYGVD) are extracellular. Residues 90–117 (SFTIDWMSMIYMLTYIPLIFPVSWLLDK) traverse the membrane as a helical segment. Residues 118–119 (KG) lie on the Cytoplasmic side of the membrane. A helical membrane pass occupies residues 120 to 139 (LRVIALVAAALNCAGTWIKV). Residues 140–146 (ASARPDL) lie on the Extracellular side of the membrane. A helical membrane pass occupies residues 147 to 175 (FPVTFLGQFTCSVAQVFILGMPSRIASVW). Choline contacts are provided by Q161 and L165. The Cytoplasmic segment spans residues 176 to 180 (FGSDE). Residues 181 to 206 (VSTACSIGVFGNQLGIAIGFLVPPIL) form a helical membrane-spanning segment. Residues 207–211 (VPNVD) are Extracellular-facing. Residues 212-241 (DLDELAAHIRVMFYITAGVATFLFVLVVIV) traverse the membrane as a helical segment. The Cytoplasmic segment spans residues 242–277 (FQERPEIPPTLAQAAARRISPESYSYTASILRLLRN). The chain crosses the membrane as a helical span at residues 278-308 (KAFILLVITYGLNVGCFYAVSTLLNRMIIEH). Y295 is a binding site for choline. The Extracellular portion of the chain corresponds to 309–312 (YPGE). The chain crosses the membrane as a helical span at residues 313 to 341 (EVNAGRIGLTIVVAGMVGSLICGIWLDRS). Over 342–343 (KT) the chain is Cytoplasmic. The helical transmembrane segment at 344-366 (YKQTTLAVYLMSLMGLVIYAFTL) threads the bilayer. Topologically, residues 367–369 (DLH) are extracellular. The chain crosses the membrane as a helical span at residues 370 to 399 (HLWVVFITAGALGFFMTGYLPLGFEFAVEL). Over 400–407 (TYPESEGT) the chain is Cytoplasmic. Residues 408 to 433 (SSGLLNCSAQVFGIIFTICQGKIMDS) traverse the membrane as a helical segment. Q417 lines the choline pocket. The Extracellular portion of the chain corresponds to 434-435 (FG). A helical transmembrane segment spans residues 436–458 (TLAGNLFLCAFLLIGTIITGCIK). The Cytoplasmic segment spans residues 459–485 (SDLRRQLANQQAQTADHLDTSPTQTRF).

This sequence belongs to the major facilitator superfamily. Feline leukemia virus subgroup C receptor (TC 2.A.1.28.1) family.

The protein resides in the cell membrane. Its subcellular location is the mitochondrion membrane. The protein localises to the endoplasmic reticulum membrane. It carries out the reaction choline(out) = choline(in). The enzyme catalyses ethanolamine(in) = ethanolamine(out). It catalyses the reaction heme b(in) = heme b(out). Its function is as follows. Choline uniporter that specifically mediates choline uptake at the blood-brain-barrier. Responsible for the majority of choline uptake across the blood-brain-barrier from the circulation into the brain. Choline, a nutrient critical for brain development, is a precursor of phosphatidylcholine, as well as betaine. Also mediates transport of ethanolamine. Choline and ethanolamine transport is not coupled with proton transport and is exclusively driven by the choline gradient across the plasma membrane. Also acts as a heme b transporter. The protein is Choline/ethanolamine transporter flvcr2b of Danio rerio (Zebrafish).